The chain runs to 152 residues: Natriuretic peptides A (152 aa).

Residues 1 to 24 (MGSFSITKGFFLFLAFWLPGHIGA) form the signal peptide. 2 propeptides span residues 25-122 (NPVY…AGPR) and 92-102 (DGGALGRGPWD). Residues 54–104 (DEVMPPQALSEQTDEAGAALSSLSEVPPWTGEVNPSQRDGGALGRGPWDPS) are disordered. Ser-128 is modified (phosphoserine). Cys-129 and Cys-145 are joined by a disulfide. The important for degradation of atrial natriuretic peptide by IDE stretch occupies residues 146–150 (NSFRY).

The protein belongs to the natriuretic peptide family. Homodimer; disulfide-linked antiparallel dimer. In terms of processing, the precursor molecule is proteolytically cleaved by CORIN at Arg-122 to produce the atrial natriuretic peptide. Undergoes further proteolytic cleavage by unknown proteases to give rise to long-acting natriuretic peptide, vessel dilator and kaliuretic peptide. Additional processing gives rise to the auriculin and atriopeptin peptides. In the kidneys, alternative processing by an unknown protease results in the peptide urodilatin. Post-translationally, cleavage by MME initiates degradation of the factor and thereby regulates its activity. Degradation by IDE results in reduced activation of NPR1 (in vitro). During IDE degradation, the resulting products can temporarily stimulate NPR2 to produce cGMP, before the fragments are completely degraded and inactivated by IDE (in vitro). Degraded by IDE. In terms of processing, phosphorylation on Ser-128 decreases vasorelaxant activity. In terms of tissue distribution, high levels of expression in the atria compared to the ventricles. Very low levels of expression detected in extracardiac tissues such as the brain, hypothalamus, pituitary, lung and aorta. As to expression, atria (at protein level). High levels of expression in the atria with very low levels of expression in the ventricles (at protein level). Relatively low levels of expression detected in the brain compared to the atria (at protein level).

Its subcellular location is the secreted. The protein localises to the perikaryon. The protein resides in the cell projection. In terms of biological role, hormone that plays a key role in mediating cardio-renal homeostasis, and is involved in vascular remodeling and regulating energy metabolism. Acts by specifically binding and stimulating NPR1 to produce cGMP, which in turn activates effector proteins, such as PRKG1, that drive various biological responses. Regulates vasodilation, natriuresis, diuresis and aldosterone synthesis and is therefore essential for regulating blood pressure, controlling the extracellular fluid volume and maintaining the fluid-electrolyte balance. Also involved in inhibiting cardiac remodeling and cardiac hypertrophy by inducing cardiomyocyte apoptosis and attenuating the growth of cardiomyocytes and fibroblasts. Plays a role in female pregnancy by promoting trophoblast invasion and spiral artery remodeling in uterus, and thus prevents pregnancy-induced hypertension. In adipose tissue, acts in various cGMP- and PKG-dependent pathways to regulate lipid metabolism and energy homeostasis. This includes up-regulating lipid metabolism and mitochondrial oxygen utilization by activating the AMP-activated protein kinase (AMPK), and increasing energy expenditure by acting via MAPK11 to promote the UCP1-dependent thermogenesis of brown adipose tissue. Binds the clearance receptor NPR3 which removes the hormone from circulation. May have a role in cardio-renal homeostasis through regulation of natriuresis, diuresis, vasodilation, and inhibiting aldosterone synthesis. In vitro, promotes the production of cGMP and induces vasodilation. May promote natriuresis, at least in part, by enhancing prostaglandin E2 synthesis resulting in the inhibition of renal Na+-K+-ATPase. However reports on the involvement of this peptide in mammal blood volume and blood pressure homeostasis are conflicting; according to a report, in vivo it is not sufficient to activate cGMP and does not inhibit collecting duct transport nor effect diuresis and natriuresis. Appears to bind to specific receptors that are distinct from the receptors bound by atrial natriuretic peptide and vessel dilator. Possibly enhances protein excretion in urine by decreasing proximal tubular protein reabsorption. Its function is as follows. May have a role in cardio-renal homeostasis through regulation of natriuresis, diuresis, and vasodilation. In vitro, promotes the production of cGMP and induces vasodilation. May promote natriuresis, at least in part, by enhancing prostaglandin E2 synthesis resulting in the inhibition of renal Na+-K+-ATPase. However reports on the involvement of this peptide in mammal blood volume and blood pressure homeostasis are conflicting; according to a report, in vivo it is not sufficient to activate cGMP and does not inhibit collecting duct transport nor effect diuresis and natriuresis. Appears to bind to specific receptors that are distinct from the receptors bound by the atrial natriuretic and long-acting natriuretic peptides. Possibly functions in protein excretion in urine by maintaining the integrity of the proximal tubules and enhancing protein excretion by decreasing proximal tubular protein reabsorption. Functionally, may have a role in cardio-renal homeostasis through regulation of diuresis and inhibiting aldosterone synthesis. In vitro, promotes the production of cGMP and induces vasodilation. May promote natriuresis, at least in part, by enhancing prostaglandin E2 synthesis resulting in the inhibition of renal Na+-K+-ATPase. May have a role in potassium excretion but not sodium excretion (natriuresis). Possibly enhances protein excretion in urine by decreasing proximal tubular protein reabsorption. In terms of biological role, hormone produced in the kidneys that appears to be important for maintaining cardio-renal homeostasis. Mediates vasodilation, natriuresis and diuresis primarily in the renal system, in order to maintain the extracellular fluid volume and control the fluid-electrolyte balance. Specifically binds and stimulates cGMP production by renal transmembrane receptors, likely NPR1. Urodilatin not ANP, may be the natriuretic peptide responsible for the regulation of sodium and water homeostasis in the kidney. May have a role in cardio-renal homeostasis through regulation of natriuresis and vasodilation. In vivo promotes natriuresis and in vitro, vasodilates renal artery strips. Its function is as follows. May have a role in cardio-renal homeostasis through regulation of regulation of natriuresis and vasodilation. In vivo promotes natriuresis. In vitro, vasodilates intestinal smooth muscle but not smooth muscle strips. Functionally, may have a role in cardio-renal homeostasis through regulation of natriuresis and vasodilation. In vivo promotes natriuresis. In vitro, selectively vasodilates intestinal and vascular smooth muscle strips. In terms of biological role, may have a role in cardio-renal homeostasis through regulation of natriuresis and vasodilation. In vivo promotes natriuresis. In vitro, selectively vasodilates intestinal smooth muscle but not vascular smooth muscle strips. The sequence is that of Natriuretic peptides A (Nppa) from Rattus norvegicus (Rat).